The sequence spans 250 residues: Ribosomal RNA small subunit methyltransferase J (250 aa).

S-adenosyl-L-methionine-binding positions include 101–102 (RD), 117–118 (ER), 153–154 (SS), and D171.

Belongs to the methyltransferase superfamily. RsmJ family.

Its subcellular location is the cytoplasm. The enzyme catalyses guanosine(1516) in 16S rRNA + S-adenosyl-L-methionine = N(2)-methylguanosine(1516) in 16S rRNA + S-adenosyl-L-homocysteine + H(+). Its function is as follows. Specifically methylates the guanosine in position 1516 of 16S rRNA. The chain is Ribosomal RNA small subunit methyltransferase J from Klebsiella pneumoniae (strain 342).